The chain runs to 639 residues: Protein phosphatase EYA4 (639 aa).

An N-acetylmethionine modification is found at Met1. Disordered stretches follow at residues 1–72 (MEDS…GGEN), 210–232 (QTQS…PQPG), and 300–368 (ADGT…DSDL). A Glycyl lysine isopeptide (Lys-Gly) (interchain with G-Cter in SUMO2) cross-link involves residue Lys14. The span at 18–30 (ESDVSQSQNSRSM) shows a compositional bias: polar residues. Lys52 is covalently cross-linked (Glycyl lysine isopeptide (Lys-Gly) (interchain with G-Cter in SUMO2)). Residues 56–66 (SNLSSTSVTTN) show a composition bias toward low complexity. Residues 300 to 334 (ADGTPSSTSTYQLQESLPGLTNQPGEFDTMQSPST) show a composition bias toward polar residues. A Phosphoserine modification is found at Ser361. The active-site Nucleophile is Asp375. 3 residues coordinate Mg(2+): Asp375, Asp377, and Asp603. Asp377 serves as the catalytic Proton donor.

It belongs to the HAD-like hydrolase superfamily. EYA family. Interacts with SIX3; translocates EYA4 from the cytoplasm to the nucleus and promotes activation of their target genes. Mg(2+) serves as cofactor. Highly expressed in heart and skeletal muscle.

The protein resides in the cytoplasm. It localises to the nucleus. The enzyme catalyses O-phospho-L-tyrosyl-[protein] + H2O = L-tyrosyl-[protein] + phosphate. Its function is as follows. Tyrosine phosphatase that specifically dephosphorylates 'Tyr-142' of histone H2AX (H2AXY142ph). 'Tyr-142' phosphorylation of histone H2AX plays a central role in DNA repair and acts as a mark that distinguishes between apoptotic and repair responses to genotoxic stress. Promotes efficient DNA repair by dephosphorylating H2AX, promoting the recruitment of DNA repair complexes containing MDC1. Its function as histone phosphatase probably explains its role in transcription regulation during organogenesis. May be involved in development of the eye. In Homo sapiens (Human), this protein is Protein phosphatase EYA4 (EYA4).